Reading from the N-terminus, the 206-residue chain is Acidic proline-rich protein PRP33 (206 aa).

The N-terminal stretch at 1-13 (MLVVLLTAALLVL) is a signal peptide. Residues 15 to 206 (SAHGSDEEVI…EQPSYLWFSS (192 aa)) are disordered. A compositionally biased stretch (acidic residues) spans 55 to 71 (ENGDGDDSDDGDDDGSG). Tandem repeats lie at residues 80–97 (PPPHGGNHQRPPPGHHHG), 98–115 (PPPSGGPQTSSQPGNPQG), 116–133 (PPPQGGPQGPPQPGNPQG), 134–152 (PPPQGGPQQRPPQPGKPQG), 153–170 (PPPQGGPQGPPQPGNPQG), and 171–189 (PPPQGGHQQRPPQPRKPQD). The 6 X 18 AA approximate tandem repeats stretch occupies residues 80–189 (PPPHGGNHQR…RPPQPRKPQD (110 aa)). Residues 103–112 (GPQTSSQPGN) show a composition bias toward low complexity. Residues 113–174 (PQGPPPQGGP…PGNPQGPPPQ (62 aa)) show a composition bias toward pro residues.

Its subcellular location is the secreted. May protect teeth by binding to tannins. The polypeptide is Acidic proline-rich protein PRP33 (Prpg1) (Rattus norvegicus (Rat)).